We begin with the raw amino-acid sequence, 157 residues long: 17.8 kDa class I heat shock protein (157 aa).

The region spanning 41–156 is the sHSP domain; sequence ETSAITNARV…KAQVKSIDIS (116 aa).

This sequence belongs to the small heat shock protein (HSP20) family. In terms of assembly, homodimer under normal physiological conditions. Aggregates in high oligomeric complexes after heat shock. Binds to AKR2A and to chloroplasts. Expressed ubiquitously at low levels under normal physiological conditions.

It localises to the cytoplasm. In terms of biological role, cytosolic mediator for sorting and targeting of nascent chloroplast outer envelope membrane (OEM) proteins to the chloroplast. Functions as an AKR2A cofactor to facilitate the targeting of OEP7 to chloroplasts. This chain is 17.8 kDa class I heat shock protein (HSP17.8), found in Arabidopsis thaliana (Mouse-ear cress).